A 734-amino-acid chain; its full sequence is Photosystem I P700 chlorophyll a apoprotein A2 (734 aa).

Helical transmembrane passes span 46–69, 135–158, 175–199, 273–291, 330–353, 369–395, 417–439, and 517–535; these read IFAS…FHVA, LYNG…LHLQ, LNHH…HVAI, IAHH…GHMY, LHFQ…QHMY, AALY…IFFI, AIIS…LYVH, and FLVH…LILV. Positions 559 and 568 each coordinate [4Fe-4S] cluster. Helical transmembrane passes span 575-596 and 643-665; these read AFYL…YWHW and LSVW…MFLI. Chlorophyll a is bound by residues H654, M662, and Y670. W671 is a phylloquinone binding site. The chain crosses the membrane as a helical span at residues 707–727; it reads LVGLAHFSVGYIFTYAAFLIA.

It belongs to the PsaA/PsaB family. As to quaternary structure, the PsaA/B heterodimer binds the P700 chlorophyll special pair and subsequent electron acceptors. PSI consists of a core antenna complex that captures photons, and an electron transfer chain that converts photonic excitation into a charge separation. The eukaryotic PSI reaction center is composed of at least 11 subunits. It depends on P700 is a chlorophyll a/chlorophyll a' dimer, A0 is one or more chlorophyll a, A1 is one or both phylloquinones and FX is a shared 4Fe-4S iron-sulfur center. as a cofactor.

The protein resides in the plastid. It localises to the chloroplast thylakoid membrane. It catalyses the reaction reduced [plastocyanin] + hnu + oxidized [2Fe-2S]-[ferredoxin] = oxidized [plastocyanin] + reduced [2Fe-2S]-[ferredoxin]. Its function is as follows. PsaA and PsaB bind P700, the primary electron donor of photosystem I (PSI), as well as the electron acceptors A0, A1 and FX. PSI is a plastocyanin-ferredoxin oxidoreductase, converting photonic excitation into a charge separation, which transfers an electron from the donor P700 chlorophyll pair to the spectroscopically characterized acceptors A0, A1, FX, FA and FB in turn. Oxidized P700 is reduced on the lumenal side of the thylakoid membrane by plastocyanin. This chain is Photosystem I P700 chlorophyll a apoprotein A2, found in Marchantia polymorpha (Common liverwort).